Here is a 129-residue protein sequence, read N- to C-terminus: NADPH-dependent 7-cyano-7-deazaguanine reductase (129 aa).

Cys-34 acts as the Thioimide intermediate in catalysis. Catalysis depends on Asp-41, which acts as the Proton donor. Substrate is bound by residues 56-58 (VEL) and 75-76 (HE).

Belongs to the GTP cyclohydrolase I family. QueF type 1 subfamily.

It localises to the cytoplasm. The catalysed reaction is 7-aminomethyl-7-carbaguanine + 2 NADP(+) = 7-cyano-7-deazaguanine + 2 NADPH + 3 H(+). It functions in the pathway tRNA modification; tRNA-queuosine biosynthesis. In terms of biological role, catalyzes the NADPH-dependent reduction of 7-cyano-7-deazaguanine (preQ0) to 7-aminomethyl-7-deazaguanine (preQ1). This is NADPH-dependent 7-cyano-7-deazaguanine reductase from Thioalkalivibrio sulfidiphilus (strain HL-EbGR7).